The sequence spans 398 residues: LIM/homeobox protein Lhx3 (398 aa).

2 LIM zinc-binding domains span residues 28–78 (CAGC…CKDD) and 87–141 (CAAC…CKAD). The homeobox DNA-binding region spans 154–213 (AKRPRTTITAKQLETLKNAYNNSPKPARHVREQLSTETGLDMRVVQVWFQNRRAKEKRLK). Disordered regions lie at residues 208-294 (KEKR…FPLE) and 307-398 (DIQA…HAQF). The segment covering 272-282 (SSLSESSPALS) has biased composition (low complexity).

Its subcellular location is the nucleus. In terms of biological role, transcription factor. This is LIM/homeobox protein Lhx3 (lhx3) from Danio rerio (Zebrafish).